Here is a 338-residue protein sequence, read N- to C-terminus: Lipoate-protein ligase A (338 aa).

Residues 29 to 216 (PATQRVLFLW…AFFAHYGERV (188 aa)) form the BPL/LPL catalytic domain. ATP is bound by residues R71, 76-79 (GAVF), and K134. K134 is a (R)-lipoate binding site.

Belongs to the LplA family. As to quaternary structure, monomer.

The protein resides in the cytoplasm. The enzyme catalyses L-lysyl-[lipoyl-carrier protein] + (R)-lipoate + ATP = N(6)-[(R)-lipoyl]-L-lysyl-[lipoyl-carrier protein] + AMP + diphosphate + H(+). It functions in the pathway protein modification; protein lipoylation via exogenous pathway; protein N(6)-(lipoyl)lysine from lipoate: step 1/2. The protein operates within protein modification; protein lipoylation via exogenous pathway; protein N(6)-(lipoyl)lysine from lipoate: step 2/2. In terms of biological role, catalyzes both the ATP-dependent activation of exogenously supplied lipoate to lipoyl-AMP and the transfer of the activated lipoyl onto the lipoyl domains of lipoate-dependent enzymes. This Escherichia coli (strain SMS-3-5 / SECEC) protein is Lipoate-protein ligase A.